Here is a 311-residue protein sequence, read N- to C-terminus: Succinate dehydrogenase [ubiquinone] iron-sulfur subunit 2, mitochondrial (311 aa).

A mitochondrion-targeting transit peptide spans methionine 1–aspartate 63. Residues methionine 1–alanine 70 form a disordered region. A compositionally biased stretch (basic and acidic residues) spans alanine 51–aspartate 63. In terms of domain architecture, 2Fe-2S ferredoxin-type spans phenylalanine 77–methionine 168. [2Fe-2S] cluster-binding residues include cysteine 128, cysteine 133, and cysteine 148. The 31-residue stretch at glutamate 211–phenylalanine 241 folds into the 4Fe-4S ferredoxin-type domain. [4Fe-4S] cluster is bound by residues cysteine 221, cysteine 224, and cysteine 227. Residue cysteine 231 participates in [3Fe-4S] cluster binding. Tryptophan 236 serves as a coordination point for a ubiquinone. [3Fe-4S] cluster is bound by residues cysteine 279 and cysteine 285. Cysteine 289 is a [4Fe-4S] cluster binding site.

It belongs to the succinate dehydrogenase/fumarate reductase iron-sulfur protein family. As to quaternary structure, component of complex II composed of eight subunits in plants: four classical SDH subunits SDH1, SDH2, SDH3 and SDH4 (a flavoprotein (FP), an iron-sulfur protein (IP), and a cytochrome b composed of a large and a small subunit.), as well as four subunits unknown in mitochondria from bacteria and heterotrophic eukaryotes. The cofactor is [2Fe-2S] cluster. [3Fe-4S] cluster is required as a cofactor. It depends on [4Fe-4S] cluster as a cofactor.

Its subcellular location is the mitochondrion inner membrane. It carries out the reaction a quinone + succinate = fumarate + a quinol. The protein operates within carbohydrate metabolism; tricarboxylic acid cycle; fumarate from succinate (eukaryal route): step 1/1. Its function is as follows. Iron-sulfur protein (IP) subunit of succinate dehydrogenase (SDH) that is involved in complex II of the mitochondrial electron transport chain and is responsible for transferring electrons from succinate to ubiquinone (coenzyme Q). In Oryza sativa subsp. japonica (Rice), this protein is Succinate dehydrogenase [ubiquinone] iron-sulfur subunit 2, mitochondrial.